A 388-amino-acid chain; its full sequence is Probable tRNA sulfurtransferase (388 aa).

The region spanning 55–162 (VTLDDKLKKI…PEGVLIFTDR (108 aa)) is the THUMP domain. ATP is bound by residues 180–181 (LL), 205–206 (TF), Arg-264, Gly-286, and Gln-295.

This sequence belongs to the ThiI family.

The protein localises to the cytoplasm. It carries out the reaction [ThiI sulfur-carrier protein]-S-sulfanyl-L-cysteine + a uridine in tRNA + 2 reduced [2Fe-2S]-[ferredoxin] + ATP + H(+) = [ThiI sulfur-carrier protein]-L-cysteine + a 4-thiouridine in tRNA + 2 oxidized [2Fe-2S]-[ferredoxin] + AMP + diphosphate. The catalysed reaction is [ThiS sulfur-carrier protein]-C-terminal Gly-Gly-AMP + S-sulfanyl-L-cysteinyl-[cysteine desulfurase] + AH2 = [ThiS sulfur-carrier protein]-C-terminal-Gly-aminoethanethioate + L-cysteinyl-[cysteine desulfurase] + A + AMP + 2 H(+). The protein operates within cofactor biosynthesis; thiamine diphosphate biosynthesis. Its function is as follows. Catalyzes the ATP-dependent transfer of a sulfur to tRNA to produce 4-thiouridine in position 8 of tRNAs, which functions as a near-UV photosensor. Also catalyzes the transfer of sulfur to the sulfur carrier protein ThiS, forming ThiS-thiocarboxylate. This is a step in the synthesis of thiazole, in the thiamine biosynthesis pathway. The sulfur is donated as persulfide by IscS. The sequence is that of Probable tRNA sulfurtransferase from Thermotoga maritima (strain ATCC 43589 / DSM 3109 / JCM 10099 / NBRC 100826 / MSB8).